The chain runs to 264 residues: tRNA pseudouridine synthase A (264 aa).

Residue aspartate 51 is the Nucleophile of the active site. A substrate-binding site is contributed by tyrosine 109.

It belongs to the tRNA pseudouridine synthase TruA family. As to quaternary structure, homodimer.

The enzyme catalyses uridine(38/39/40) in tRNA = pseudouridine(38/39/40) in tRNA. Its function is as follows. Formation of pseudouridine at positions 38, 39 and 40 in the anticodon stem and loop of transfer RNAs. This chain is tRNA pseudouridine synthase A, found in Vibrio parahaemolyticus serotype O3:K6 (strain RIMD 2210633).